Consider the following 234-residue polypeptide: MEFTPRLQQGILLRRYKRFLADVQLSDGSEITLHCPNTGSMRNCLYPGETVWFSTSDNPKRKYAHTWELMTTPDSGLIGIHSGQANTLAEEAINKGIIKELTGYDSLSREVKYGDENSRIDILLQGAQKPACYIEVKSCTLLEDGQGYFPDAVSLRGQKHLRELMHMVSQGHRAVLLFVVQHSDIFSVAPAAHIDPEYAKLLKKAVLAGVEVLAYRCEMSPTEIHLAQACVVRV.

Belongs to the SfsA family.

The protein is Sugar fermentation stimulation protein homolog of Shewanella baltica (strain OS155 / ATCC BAA-1091).